A 55-amino-acid polypeptide reads, in one-letter code: Variant surface glycoprotein ETAT 1.2 (55 aa).

An N-linked (GlcNAc...) asparagine glycan is attached at asparagine 34. Asparagine 38 is lipidated: GPI-anchor amidated asparagine. A propeptide spans 39–55 (removed in mature form); it reads NSFAIKTSTLLLAVLLF.

It is found in the cell membrane. VSG forms a coat on the surface of the parasite. The trypanosome evades the immune response of the host by expressing a series of antigenically distinct VSGs from an estimated 1000 VSG genes. The chain is Variant surface glycoprotein ETAT 1.2 from Trypanosoma brucei rhodesiense.